The chain runs to 195 residues: Ethylene-responsive transcription factor ERF018 (195 aa).

The segment covering 1–13 has biased composition (basic and acidic residues); sequence MVKQAMKEEEKKR. A disordered region spans residues 1–22; sequence MVKQAMKEEEKKRNTAMQSKYK. A DNA-binding region (AP2/ERF) is located at residues 20 to 77; it reads KYKGVRKRKWGKWVSEIRLPHSRERIWLGSYDTPEKAARAFDAAQFCLRGGDANFNFP.

Belongs to the AP2/ERF transcription factor family. ERF subfamily.

The protein localises to the nucleus. Probably acts as a transcriptional activator. Binds to the GCC-box pathogenesis-related promoter element. May be involved in the regulation of gene expression by stress factors and by components of stress signal transduction pathways. The protein is Ethylene-responsive transcription factor ERF018 (ERF018) of Arabidopsis thaliana (Mouse-ear cress).